Here is a 149-residue protein sequence, read N- to C-terminus: MNKQLRQLKVREILCQHDVGNQHDLMRLLNSAGIRVAQATLSRDCNEIGVVRSRDSKGYRLVYSEKNPGWIIKGLVGVEVLSVKANETSIIIRTLPGRAHGVGSFLDELKSPMILGTIAGDDTVLVIPGSIKQISELVSYIKDNLSQNA.

It belongs to the ArgR family.

It localises to the cytoplasm. It participates in amino-acid biosynthesis; L-arginine biosynthesis [regulation]. Functionally, regulates arginine biosynthesis genes. This Chlorobium phaeobacteroides (strain DSM 266 / SMG 266 / 2430) protein is Arginine repressor.